Reading from the N-terminus, the 431-residue chain is Beta-lactamase hydrolase-like protein (431 aa).

Residues His-212, His-214, and His-286 each coordinate Zn(2+). Position 309 (Asp-309) interacts with substrate.

This sequence belongs to the metallo-beta-lactamase superfamily. Zn(2+) is required as a cofactor.

Its function is as follows. Could play a role in cell adherence or biofilm development. This chain is Beta-lactamase hydrolase-like protein, found in Xylella fastidiosa (strain Temecula1 / ATCC 700964).